The chain runs to 240 residues: MSLVVCQPQINESFYQKDDMGGLSFLQSMSDITSIAQTKEDKAYVHPMEKRSVSKLNEKSLEMCTESLGTETGSESGDELSLLAFEATTTPRAPPRQLKPQEDTNLPDKTPPMSRNNSFPPPIKFVEDSKYNRMVRWLGEDGRIVVQAIRVSSPPSCFVSERGEGRLRLILTSESSLLSHNHEEEEEEETEEGIDEETSENLEGKSGNKKFSRFSRRCKENGREPKPMLTWKQQQFWVAT.

2 disordered regions span residues 89-124 and 177-229; these read TTPR…PPIK and LLSH…KPML. The region spanning 117 to 171 is the FAF domain; sequence NSFPPPIKFVEDSKYNRMVRWLGEDGRIVVQAIRVSSPPSCFVSERGEGRLRLIL. Positions 184–200 are enriched in acidic residues; that stretch reads EEEEEETEEGIDEETSE. Positions 207 to 216 are enriched in basic residues; sequence GNKKFSRFSR. The span at 217-226 shows a compositional bias: basic and acidic residues; that stretch reads RCKENGREPK.

It belongs to the fantastic four family. Expressed in the shoot apex, stamens, carpels and young siliques. Detected in provascular and vascular tissue, and in the center of the vegetative and inflorescence meristems. Expressed in the funiculus. In roots and leaves, predominantly expressed in phloem.

Functionally, regulates the size of the shoot meristem by modulating the CLV3-WUS feedback loop. Can repress WUS but is under negative control by CLV3. The sequence is that of Protein FANTASTIC FOUR 2 (FAF2) from Arabidopsis thaliana (Mouse-ear cress).